We begin with the raw amino-acid sequence, 105 residues long: Met repressor (105 aa).

The protein belongs to the MetJ family. In terms of assembly, homodimer.

The protein localises to the cytoplasm. Functionally, this regulatory protein, when combined with SAM (S-adenosylmethionine) represses the expression of the methionine regulon and of enzymes involved in SAM synthesis. In Haemophilus ducreyi (strain 35000HP / ATCC 700724), this protein is Met repressor.